A 284-amino-acid chain; its full sequence is Bifunctional protein FolD (284 aa).

NADP(+)-binding positions include 166-168 (GAS) and Ile232.

The protein belongs to the tetrahydrofolate dehydrogenase/cyclohydrolase family. Homodimer.

It carries out the reaction (6R)-5,10-methylene-5,6,7,8-tetrahydrofolate + NADP(+) = (6R)-5,10-methenyltetrahydrofolate + NADPH. The enzyme catalyses (6R)-5,10-methenyltetrahydrofolate + H2O = (6R)-10-formyltetrahydrofolate + H(+). The protein operates within one-carbon metabolism; tetrahydrofolate interconversion. In terms of biological role, catalyzes the oxidation of 5,10-methylenetetrahydrofolate to 5,10-methenyltetrahydrofolate and then the hydrolysis of 5,10-methenyltetrahydrofolate to 10-formyltetrahydrofolate. In Pseudomonas putida (strain W619), this protein is Bifunctional protein FolD.